Here is a 224-residue protein sequence, read N- to C-terminus: NBPF family member NBPF6-like protein (224 aa).

The region spanning 159–224 (ENHHDRKDEE…ASVCDVQDQL (66 aa)) is the Olduvai domain. Residues 198–209 (YLTHSSHHDSHR) are compositionally biased toward basic and acidic residues. The tract at residues 198-224 (YLTHSSHHDSHRPPSSIASVCDVQDQL) is disordered.

The protein belongs to the NBPF family.

This chain is NBPF family member NBPF6-like protein, found in Bos taurus (Bovine).